The following is a 198-amino-acid chain: Nucleoid occlusion factor SlmA (198 aa).

Positions 10 to 70 constitute an HTH tetR-type domain; that stretch reads NRREEILQSL…SLIEFIEDSL (61 aa). The segment at residues 33 to 52 is a DNA-binding region (H-T-H motif); the sequence is TTAKLAASVGVSEAALYRHF. Residues 117–144 are a coiled coil; it reads EQDRLQGRINQLFERIEAQLRQVLREKR.

The protein belongs to the nucleoid occlusion factor SlmA family. In terms of assembly, homodimer. Interacts with FtsZ.

Its subcellular location is the cytoplasm. The protein localises to the nucleoid. In terms of biological role, required for nucleoid occlusion (NO) phenomenon, which prevents Z-ring formation and cell division over the nucleoid. Acts as a DNA-associated cell division inhibitor that binds simultaneously chromosomal DNA and FtsZ, and disrupts the assembly of FtsZ polymers. SlmA-DNA-binding sequences (SBS) are dispersed on non-Ter regions of the chromosome, preventing FtsZ polymerization at these regions. The protein is Nucleoid occlusion factor SlmA of Escherichia coli O127:H6 (strain E2348/69 / EPEC).